Reading from the N-terminus, the 157-residue chain is Phosphopantetheine adenylyltransferase (157 aa).

Threonine 10 contacts substrate. ATP-binding positions include 10–11 (TF) and histidine 18. Substrate contacts are provided by lysine 42, leucine 74, and arginine 88. Residues 89–91 (GLR), glutamate 99, and 124–130 (NAFISSS) each bind ATP.

The protein belongs to the bacterial CoaD family. In terms of assembly, homohexamer. Requires Mg(2+) as cofactor.

Its subcellular location is the cytoplasm. It catalyses the reaction (R)-4'-phosphopantetheine + ATP + H(+) = 3'-dephospho-CoA + diphosphate. Its pathway is cofactor biosynthesis; coenzyme A biosynthesis; CoA from (R)-pantothenate: step 4/5. Its activity is regulated as follows. Tightly binds to CoA, which is presumably a feedback inhibitor. Potently inhibited by D-amethopterin, which simultaneously occupies the 4'-phosphopantetheine- and ATP-binding sites; following treatment with D-amethopterin, H.pylori exhibits morphological characteristics associated with cell death, showing that D-amethopterin displays antimicrobial activity. Reversibly transfers an adenylyl group from ATP to 4'-phosphopantetheine, yielding dephospho-CoA (dPCoA) and pyrophosphate. This chain is Phosphopantetheine adenylyltransferase, found in Helicobacter pylori (strain ATCC 700392 / 26695) (Campylobacter pylori).